Consider the following 484-residue polypeptide: Poly(A) RNA polymerase GLD2 (484 aa).

Ser-62 and Ser-69 each carry phosphoserine. The Nuclear localization signal motif lies at 76-92 (KRISDEKAFPLDGKRQR). Ser-95 is subject to Phosphoserine. The Mg(2+) site is built by Asp-213 and Asp-215. A PAP-associated domain is found at 386 to 440 (SLGDLLLGFLKYYATEFDWNTQMISVREAKAIPRPDDMEWRNKYICVEEPFDGTN).

The protein belongs to the DNA polymerase type-B-like family. GLD2 subfamily. As to quaternary structure, interacts with CPEB1, CPEB2, CPSF1 and PABPC1. Interacts with QKI isoform QKI7; promoting recruitment to miRNA miR-122 and miR-122 stabilization. Mg(2+) is required as a cofactor. Mn(2+) serves as cofactor. In terms of tissue distribution, ubiquitous. In brain, it is highly expressed in the cerebral cortex, cerebellum, hippocampus and olfactory bulb.

Its subcellular location is the cytoplasm. The protein localises to the nucleus. It carries out the reaction RNA(n) + ATP = RNA(n)-3'-adenine ribonucleotide + diphosphate. Cytoplasmic poly(A) RNA polymerase that adds successive AMP monomers to the 3'-end of specific RNAs, forming a poly(A) tail. In contrast to the canonical nuclear poly(A) RNA polymerase, it only adds poly(A) to selected cytoplasmic mRNAs. Does not play a role in replication-dependent histone mRNA degradation. Adds a single nucleotide to the 3' end of specific miRNAs, monoadenylation stabilizes and prolongs the activity of some but not all miRNAs. This chain is Poly(A) RNA polymerase GLD2 (Tent2), found in Mus musculus (Mouse).